The sequence spans 51 residues: Ribosome biogenesis protein Nop10 (51 aa).

Belongs to the NOP10 family.

Involved in ribosome biogenesis; more specifically in 18S rRNA pseudouridylation and in cleavage of pre-rRNA. This Methanococcus maripaludis (strain C6 / ATCC BAA-1332) protein is Ribosome biogenesis protein Nop10.